We begin with the raw amino-acid sequence, 206 residues long: Guanylate kinase (206 aa).

The region spanning 6–184 is the Guanylate kinase-like domain; that stretch reads GTLYIISAPS…ALGDLKAIFR (179 aa). Residue 13-20 coordinates ATP; it reads APSGAGKS.

This sequence belongs to the guanylate kinase family.

The protein resides in the cytoplasm. It catalyses the reaction GMP + ATP = GDP + ADP. Its function is as follows. Essential for recycling GMP and indirectly, cGMP. The protein is Guanylate kinase of Pseudomonas fluorescens (strain ATCC BAA-477 / NRRL B-23932 / Pf-5).